A 947-amino-acid chain; its full sequence is DEAD-box ATP-dependent RNA helicase 45 (947 aa).

A compositionally biased stretch (acidic residues) spans 1–14 (MEEEEVVVVVDEEE). 2 disordered regions span residues 1–132 (MEEE…EDEI) and 159–221 (SMPA…EEFM). 2 stretches are compositionally biased toward basic and acidic residues: residues 15–31 (SERR…KRLD) and 42–61 (KEWQ…REQE). Residues 62-82 (AAAGAGTPAAAAGADGDSNAG) show a composition bias toward low complexity. Composition is skewed to acidic residues over residues 88 to 108 (DGEE…EDDG) and 196 to 219 (DDSD…DDEE). A Q motif motif is present at residues 285-313 (KTWVQSGLTSKLLDTIKKLGFEKPMPIQA). Residues 316–494 (LPIIMSGRDC…RKVLTKPVEI (179 aa)) form the Helicase ATP-binding domain. 329-336 (AKTGSGKT) lines the ATP pocket. Residues 442–445 (DEAD) carry the DEAD box motif. The 169-residue stretch at 479–647 (QVEILARKVL…AVPQDLKGLA (169 aa)) folds into the Helicase C-terminal domain. The interval 658–710 (TEQAHGTGYGGSGFKFNEEEDEARRSAKKAQAREYGYEEDKSDSDSDEEGGVR) is disordered. The span at 697 to 706 (DKSDSDSDEE) shows a compositional bias: acidic residues. The stretch at 854–879 (TELSVKKAKSELKRVLEDCANHALNL) forms a coiled coil.

The protein belongs to the DEAD box helicase family. DDX46/PRP5 subfamily.

It carries out the reaction ATP + H2O = ADP + phosphate + H(+). This is DEAD-box ATP-dependent RNA helicase 45 from Oryza sativa subsp. japonica (Rice).